A 237-amino-acid chain; its full sequence is 3-oxoacyl-[acyl-carrier-protein] reductase (237 aa).

An N-acetylmethionine modification is found at Met1. Residues 11–14 (SRGI) and 34–35 (RN) each bind NADP(+). Residue Lys40 is modified to N6-acetyllysine. Residues Asp56 and 83–85 (AAG) each bind NADP(+). Residue Lys96 is modified to N6-acetyllysine. Ser135 contacts substrate. NADP(+)-binding positions include Tyr148, Lys152, and 181–183 (VHT). Tyr148 acts as the Proton acceptor in catalysis. Lys195 is subject to N6-acetyllysine.

It belongs to the short-chain dehydrogenases/reductases (SDR) family. Homotetramer (in vitro). Heterotetramer with HSD17B8; contains two molecules each of HSD17B8 and CBR4. Does not form homotetramers when HSD17B8 is coexpressed, only heterotetramers (in vitro). As to expression, detected in liver and kidney (at protein level). Displays the highest expression in neuronal and muscle tissues.

It is found in the mitochondrion matrix. The enzyme catalyses a (3R)-hydroxyacyl-[ACP] + NADP(+) = a 3-oxoacyl-[ACP] + NADPH + H(+). It carries out the reaction a quinone + NADPH + H(+) = a quinol + NADP(+). Its pathway is lipid metabolism; fatty acid biosynthesis. Its function is as follows. Component of the heterotetramer complex KAR (3-ketoacyl-[acyl carrier protein] reductase or 3-ketoacyl-[ACP] reductase) that forms part of the mitochondrial fatty acid synthase (mtFAS). Beta-subunit of the KAR heterotetramer complex, responsible for the 3-ketoacyl-ACP reductase activity of the mtFAS, reduces 3-oxoacyl-[ACP] to (3R)-hydroxyacyl-[ACP] in a NADPH-dependent manner with no chain length preference, thereby participating in mitochondrial fatty acid biosynthesis. The homotetramer has NADPH-dependent quinone reductase activity (in vitro), hence could play a role in protection against cytotoxicity of exogenous quinones. As a heterotetramer, it can also reduce 9,10-phenanthrenequinone, 1,4-benzoquinone and various other o-quinones and p-quinones (in vitro). This chain is 3-oxoacyl-[acyl-carrier-protein] reductase (CBR4), found in Homo sapiens (Human).